Reading from the N-terminus, the 456-residue chain is Tyrosine phenol-lyase (456 aa).

Lys257 carries the N6-(pyridoxal phosphate)lysine modification.

This sequence belongs to the beta-eliminating lyase family. As to quaternary structure, homotetramer. Pyridoxal 5'-phosphate is required as a cofactor.

The enzyme catalyses L-tyrosine + H2O = phenol + pyruvate + NH4(+). The sequence is that of Tyrosine phenol-lyase (tpl) from Citrobacter freundii.